The primary structure comprises 272 residues: Tryptophan synthase alpha chain (272 aa).

Active-site proton acceptor residues include glutamate 53 and aspartate 64.

It belongs to the TrpA family. As to quaternary structure, tetramer of two alpha and two beta chains.

The enzyme catalyses (1S,2R)-1-C-(indol-3-yl)glycerol 3-phosphate + L-serine = D-glyceraldehyde 3-phosphate + L-tryptophan + H2O. It functions in the pathway amino-acid biosynthesis; L-tryptophan biosynthesis; L-tryptophan from chorismate: step 5/5. Its function is as follows. The alpha subunit is responsible for the aldol cleavage of indoleglycerol phosphate to indole and glyceraldehyde 3-phosphate. This is Tryptophan synthase alpha chain from Xanthomonas campestris pv. campestris (strain B100).